We begin with the raw amino-acid sequence, 100 residues long: Large ribosomal subunit protein bL28 (100 aa).

The protein belongs to the bacterial ribosomal protein bL28 family.

This chain is Large ribosomal subunit protein bL28, found in Ehrlichia ruminantium (strain Welgevonden).